Consider the following 447-residue polypeptide: Tubulin alpha-1 chain (447 aa).

GTP-binding residues include glutamine 11, glutamate 72, serine 141, glycine 145, threonine 146, threonine 180, asparagine 207, and asparagine 229. Glutamate 72 provides a ligand contact to Mg(2+). The active site involves glutamate 255.

The protein belongs to the tubulin family. As to quaternary structure, dimer of alpha and beta chains. A typical microtubule is a hollow water-filled tube with an outer diameter of 25 nm and an inner diameter of 15 nM. Alpha-beta heterodimers associate head-to-tail to form protofilaments running lengthwise along the microtubule wall with the beta-tubulin subunit facing the microtubule plus end conferring a structural polarity. Microtubules usually have 13 protofilaments but different protofilament numbers can be found in some organisms and specialized cells. It depends on Mg(2+) as a cofactor.

It localises to the cytoplasm. Its subcellular location is the cytoskeleton. It carries out the reaction GTP + H2O = GDP + phosphate + H(+). Its function is as follows. Tubulin is the major constituent of microtubules, a cylinder consisting of laterally associated linear protofilaments composed of alpha- and beta-tubulin heterodimers. Microtubules grow by the addition of GTP-tubulin dimers to the microtubule end, where a stabilizing cap forms. Below the cap, tubulin dimers are in GDP-bound state, owing to GTPase activity of alpha-tubulin. This is Tubulin alpha-1 chain (TUB1) from Saccharomyces cerevisiae (strain ATCC 204508 / S288c) (Baker's yeast).